The sequence spans 318 residues: Methionyl-tRNA formyltransferase (318 aa).

112 to 115 (SILP) serves as a coordination point for (6S)-5,6,7,8-tetrahydrofolate.

This sequence belongs to the Fmt family.

The enzyme catalyses L-methionyl-tRNA(fMet) + (6R)-10-formyltetrahydrofolate = N-formyl-L-methionyl-tRNA(fMet) + (6S)-5,6,7,8-tetrahydrofolate + H(+). Its function is as follows. Attaches a formyl group to the free amino group of methionyl-tRNA(fMet). The formyl group appears to play a dual role in the initiator identity of N-formylmethionyl-tRNA by promoting its recognition by IF2 and preventing the misappropriation of this tRNA by the elongation apparatus. This is Methionyl-tRNA formyltransferase from Shewanella sp. (strain MR-7).